Here is a 220-residue protein sequence, read N- to C-terminus: Ribonuclease P protein component 3 (220 aa).

It belongs to the eukaryotic/archaeal RNase P protein component 3 family. In terms of assembly, consists of a catalytic RNA component and at least 4-5 protein subunits.

It localises to the cytoplasm. It carries out the reaction Endonucleolytic cleavage of RNA, removing 5'-extranucleotides from tRNA precursor.. In terms of biological role, part of ribonuclease P, a protein complex that generates mature tRNA molecules by cleaving their 5'-ends. The polypeptide is Ribonuclease P protein component 3 (Thermococcus kodakarensis (strain ATCC BAA-918 / JCM 12380 / KOD1) (Pyrococcus kodakaraensis (strain KOD1))).